The following is a 106-amino-acid chain: Synaptic plasticity regulator PANTS (106 aa).

Residues Leu-67–Gln-106 are disordered.

The protein belongs to the UPF0545 family. Rapidly degraded by proteolysis following neuronal stimulation, resulting in increased AMPA receptor clustering.

The protein resides in the synapse. It localises to the synaptic cleft. Functionally, negatively regulates long-term potentiation and modulates adult synaptic plasticity. The sequence is that of Synaptic plasticity regulator PANTS from Xenopus laevis (African clawed frog).